The primary structure comprises 159 residues: Small ribosomal subunit protein bS6 (159 aa).

Residues selenocysteine 46 and selenocysteine 52 are each a non-standard amino acid (selenocysteine).

Belongs to the bacterial ribosomal protein bS6 family.

In terms of biological role, binds together with bS18 to 16S ribosomal RNA. The sequence is that of Small ribosomal subunit protein bS6 from Desulfotalea psychrophila (strain LSv54 / DSM 12343).